Reading from the N-terminus, the 271-residue chain is Serine protease SP24D (271 aa).

Residues 1 to 22 (MTLADRVPLALAALAYLALVSG) form the signal peptide. Residues 23–49 (VRFHLSEQNDVLPGGSQARRPFFQGAR) constitute a propeptide, activation peptide. Residues 50–269 (IVGGSVASEG…FVTWIQTTMR (220 aa)) enclose the Peptidase S1 domain. A disulfide bond links Cys75 and Cys91. Residues His90 and Asp136 each act as charge relay system in the active site. Intrachain disulfides connect Cys199–Cys211 and Cys221–Cys246. Ser225 (charge relay system) is an active-site residue.

It belongs to the peptidase S1 family. In terms of tissue distribution, highest level of adult expression is in the thorax.

In Anopheles gambiae (African malaria mosquito), this protein is Serine protease SP24D (Sp24D).